The sequence spans 464 residues: Peptidase inhibitor 16 (464 aa).

The signal sequence occupies residues 1–27; sequence MHGSGSLLACLLPPLLLLGAAPGPAGA. In terms of domain architecture, SCP spans 37 to 165; sequence VELHNLYRTQ…TNIHLLVCNY (129 aa). The N-linked (GlcNAc...) asparagine glycan is linked to asparagine 114. Disordered stretches follow at residues 208 to 241, 260 to 281, 304 to 347, and 386 to 412; these read DLSS…TEPP, VETK…TKTP, PATL…LMGT, and TTLK…ANAV. Positions 311-325 are enriched in basic and acidic residues; the sequence is STHDPIPKSADKEAS. The span at 395-411 shows a compositional bias: low complexity; the sequence is SSKSLSNSPSASATANA.

It belongs to the CRISP family. As to quaternary structure, interacts with PSP94/MSMB. N-glycosylated.

Its subcellular location is the secreted. Functionally, may inhibit cardiomyocyte growth. This chain is Peptidase inhibitor 16 (PI16), found in Bos taurus (Bovine).